A 592-amino-acid polypeptide reads, in one-letter code: N-acetyltransferase ESCO2 (592 aa).

Phosphoserine is present on residues Ser41 and Ser85. The disordered stretch occupies residues 267 to 294 (KSSVKVQNARSKNEEKLRKNPSGAVVSS). Ser309 carries the post-translational modification Phosphoserine. The CCHH-type zinc-finger motif lies at 384 to 408 (TVCKSCGMIYTASNPEDEIQHLQHH).

It belongs to the acetyltransferase family. ECO subfamily.

The protein localises to the nucleus. It localises to the chromosome. The enzyme catalyses L-lysyl-[protein] + acetyl-CoA = N(6)-acetyl-L-lysyl-[protein] + CoA + H(+). Functionally, acetyltransferase required for the establishment of sister chromatid cohesion. Couples the processes of cohesion and DNA replication to ensure that only sister chromatids become paired together. In contrast to the structural cohesins, the deposition and establishment factors are required only during the S phase. Acetylates the cohesin component SMC3. In Mus musculus (Mouse), this protein is N-acetyltransferase ESCO2 (Esco2).